A 98-amino-acid chain; its full sequence is NADH-ubiquinone oxidoreductase chain 4L (98 aa).

3 consecutive transmembrane segments (helical) span residues 1-21, 25-45, and 59-81; these read MSLVHINIFLAFTVSLVGLLM, HLMSSLLCLEGMMLSLFVMAT, and MPIILLVFAACERALGLSLLVMV.

The protein belongs to the complex I subunit 4L family. In terms of assembly, core subunit of respiratory chain NADH dehydrogenase (Complex I) which is composed of 45 different subunits.

It localises to the mitochondrion inner membrane. The catalysed reaction is a ubiquinone + NADH + 5 H(+)(in) = a ubiquinol + NAD(+) + 4 H(+)(out). In terms of biological role, core subunit of the mitochondrial membrane respiratory chain NADH dehydrogenase (Complex I) which catalyzes electron transfer from NADH through the respiratory chain, using ubiquinone as an electron acceptor. Part of the enzyme membrane arm which is embedded in the lipid bilayer and involved in proton translocation. The chain is NADH-ubiquinone oxidoreductase chain 4L (MT-ND4L) from Equus caballus (Horse).